Consider the following 180-residue polypeptide: Large ribosomal subunit protein uL6 (180 aa).

Belongs to the universal ribosomal protein uL6 family. Part of the 50S ribosomal subunit.

Its function is as follows. This protein binds to the 23S rRNA, and is important in its secondary structure. It is located near the subunit interface in the base of the L7/L12 stalk, and near the tRNA binding site of the peptidyltransferase center. The protein is Large ribosomal subunit protein uL6 of Clostridium botulinum (strain Eklund 17B / Type B).